Consider the following 247-residue polypeptide: UPF0273 protein PF1931 (247 aa).

The KaiC domain maps to 3–247; it reads RRVKTGIPGM…VLKRGRIYEL (245 aa). 30 to 37 is a binding site for ATP; the sequence is GGPGTGKS.

It belongs to the UPF0273 family.

The polypeptide is UPF0273 protein PF1931 (Pyrococcus furiosus (strain ATCC 43587 / DSM 3638 / JCM 8422 / Vc1)).